Here is a 315-residue protein sequence, read N- to C-terminus: Zinc finger protein 691 (315 aa).

The segment covering 1–10 (MSLCSPTHSA) has biased composition (polar residues). The segment at 1–90 (MSLCSPTHSA…QETHPKKPWQ (90 aa)) is disordered. The span at 33–58 (GSEKEQSPEPHLPEEGEGGKPWRVDD) shows a compositional bias: basic and acidic residues. 3 positions are modified to phosphoserine: serine 39, serine 75, and serine 77. Lysine 113 is covalently cross-linked (Glycyl lysine isopeptide (Lys-Gly) (interchain with G-Cter in SUMO2)). C2H2-type zinc fingers lie at residues 115–137 (FICAQCGKTFNNTSNLRTHQRIH), 143–165 (YKCSECGKSFSRSSNRIRHERIH), 171–193 (YKCPKCQESFRRRSDLTTHQQDH), 199–221 (YRCDICGKSFSQSATLAVHHRTH), 227–249 (YICCECGKSFSNSSSFGVHHRTH), 255–277 (YECTECGRTFSDISNFGAHQRTH), and 283–305 (YRCTVCGKHFSRSSNLIRHQKTH).

The protein belongs to the krueppel C2H2-type zinc-finger protein family.

It localises to the nucleus. In terms of biological role, may be involved in transcriptional regulation. This Homo sapiens (Human) protein is Zinc finger protein 691 (ZNF691).